The following is a 142-amino-acid chain: Large ribosomal subunit protein uL11 (142 aa).

Belongs to the universal ribosomal protein uL11 family. In terms of assembly, part of the ribosomal stalk of the 50S ribosomal subunit. Interacts with L10 and the large rRNA to form the base of the stalk. L10 forms an elongated spine to which L12 dimers bind in a sequential fashion forming a multimeric L10(L12)X complex. Post-translationally, one or more lysine residues are methylated.

Its function is as follows. Forms part of the ribosomal stalk which helps the ribosome interact with GTP-bound translation factors. The chain is Large ribosomal subunit protein uL11 from Bradyrhizobium sp. (strain ORS 278).